The following is a 204-amino-acid chain: Dof zinc finger protein DOF3.1 (204 aa).

A disordered region spans residues 1–25; that stretch reads MQDPAAYYQTMMAKQQQQQQPQFAE. The segment at 29–83 adopts a Dof-type zinc-finger fold; the sequence is LKCPRCDSPNTKFCYYNNYNLSQPRHFCKSCRRYWTKGGALRNVPVGGGSRKNAT. 4 residues coordinate Zn(2+): Cys-31, Cys-34, Cys-56, and Cys-59. 2 disordered regions span residues 70–128 and 182–204; these read RNVP…TRML and RTEP…AEKN. Positions 84–102 are enriched in low complexity; it reads KRSTSSSSSASSPSNSSQN. The segment covering 106–124 has biased composition (basic and acidic residues); sequence KNPDPDPDPRNSQKPDLDP.

The protein localises to the nucleus. In terms of biological role, transcription factor that binds specifically to a 5'-AA[AG]G-3' consensus core sequence. This chain is Dof zinc finger protein DOF3.1 (DOF3.1), found in Arabidopsis thaliana (Mouse-ear cress).